Here is a 466-residue protein sequence, read N- to C-terminus: Gamma-aminobutyric acid receptor subunit gamma-2 (466 aa).

A signal peptide spans 1 to 38 (MSSPNTWSTGSTVYSPVFSQKMTLWILLLLSLYPGFTS). At 39–274 (QKSDDDYEDY…FDLSRRMGYF (236 aa)) the chain is on the extracellular side. N-linked (GlcNAc...) asparagine glycans are attached at residues Asn-51 and Asn-128. A disulfide bridge connects residues Cys-189 and Cys-203. Asn-246 is a glycosylation site (N-linked (GlcNAc...) asparagine). Residues 275 to 295 (TIQTYIPCTLIVVLSWVSFWI) traverse the membrane as a helical segment. The Cytoplasmic portion of the chain corresponds to 296-301 (NKDAVP). A helical transmembrane segment spans residues 302 to 321 (ARTSLGITTVLTMTTLSTIA). The Extracellular segment spans residues 322-333 (RKSLPKVSYVTA). The chain crosses the membrane as a helical span at residues 334-358 (MDLFVSVCFIFVFSALVEYGTLHYF). Residues 359–442 (VSNRKPSKDK…IHIRIAKMDS (84 aa)) lie on the Cytoplasmic side of the membrane. A helical membrane pass occupies residues 443-463 (YARIFFPTAFCLFNLVYWVSY). The Extracellular portion of the chain corresponds to 464-466 (LYL).

It belongs to the ligand-gated ion channel (TC 1.A.9) family. Gamma-aminobutyric acid receptor (TC 1.A.9.5) subfamily. GABRG2 sub-subfamily. As to quaternary structure, heteropentamer, formed by a combination of alpha (GABRA1-6), beta (GABRB1-3), gamma (GABRG1-3), delta (GABRD), epsilon (GABRE), rho (GABRR1-3), pi (GABRP) and theta (GABRQ) chains, each subunit exhibiting distinct physiological and pharmacological properties. Interacts with GABARAP. Interacts with KIF21B. Identified in a complex of 720 kDa composed of LHFPL4, NLGN2, GABRA1, GABRB2, GABRG2 and GABRB3. Interacts with LHFPL4. Interacts with SHISA7; interaction leads to the regulation of GABA(A) receptor trafficking, channel deactivation kinetics and pharmacology. In terms of processing, palmitoylated by ZDHHC3/GODZ; required for the accumulation of GABA(A) receptors at the postsynaptic membrane of inhibitory GABAergic synapses. Glycosylated. Expressed in brain (at protein level). Expressed in lungs, in alveolar epithelium.

The protein resides in the postsynaptic cell membrane. It is found in the cell membrane. Its subcellular location is the cell projection. The protein localises to the dendrite. It localises to the cytoplasmic vesicle membrane. The catalysed reaction is chloride(in) = chloride(out). Allosterically activated by benzodiazepines. Activated by pentobarbital. Inhibited by the antagonist bicuculline. Inhibited by zinc ions. Potentiated by histamine. Functionally, gamma subunit of the heteropentameric ligand-gated chloride channel gated by gamma-aminobutyric acid (GABA), a major inhibitory neurotransmitter in the brain. GABA-gated chloride channels, also named GABA(A) receptors (GABAAR), consist of five subunits arranged around a central pore and contain GABA active binding site(s) located at the alpha and beta subunit interface(s). When activated by GABA, GABAARs selectively allow the flow of chloride anions across the cell membrane down their electrochemical gradient. Gamma-2/GABRG2-containing GABAARs are found at both synaptic and extrasynaptic sites. Chloride influx into the postsynaptic neuron following GABAAR opening decreases the neuron ability to generate a new action potential, thereby reducing nerve transmission. GABAARs containing alpha-1 and beta-2 or -3 subunits exhibit synaptogenic activity; the gamma-2 subunit being necessary but not sufficient to induce rapid synaptic contacts formation. Extrasynaptic gamma-2-containing receptors contribute to the tonic GABAergic inhibition. GABAARs function also as histamine receptor where histamine binds at the interface of two neighboring beta subunits and potentiates GABA response in a gamma-2 subunit-controlled manner. This Rattus norvegicus (Rat) protein is Gamma-aminobutyric acid receptor subunit gamma-2.